Consider the following 725-residue polypeptide: MQSTANYLWMLSDILGQGATANVYRGRNKKTGDLYAVKVFNSLSFQRPADVQMREFEVLKKLNHKNIVKLFAIEEEMSSRHKVLVMEFCPCASLYSVLEEPTNSYGLPESEFLIVSRDVVAGMNHLRENGIIHRDIKPGNIMREIGEDGKSVYKLTDFGAARELEDDEQFVSLYGTEEYLHPDMYERAVLRKEHQKKYSATVDLWSIGVTFYHAATGSLPFRPFEGPRRNKEVMYKIIAGKPSGAISGVQRAENGPIEWSGELPATCNLSMGLQTLFTPVLANILEADQEKCWGFEQFFAVTNDIFNRIVVHVFSLQQMTPHKIYINTYDKVPDFHDLVYKQTKIPGQNQELLFEGRRLVLEQGRLAQHFPITTDENPIFVLTREMVSVIGLRFDEIVIPKPISHYDLDVDANMAKAVTGVACYYCRIAASLLLVLDLMRKGIRWLSELMKEEYNENVHRNTEVSLKLNFCNRTTEKDLKIYEQLMQTSVESEVYAIHAKLLNLSSTQEGLKSSLQEVKNKLTPGGTLMDSWINTEGIHAADRNVEKLQVLLSLITEIYCQFKKDKAQRRLSYNEEQIHKFDKQKLCLHAAKAYSLFKDECVGKYEVFRSKTLEWMRKMIHVRKQLFSIKSKCFDIEEEASKCQHYINQYQEKMSPKMFAAPSGMKSAVNPIYSSPNTLVEMTLGMRKLKEDMEGVVKELEENNHILERFGALTIDGDFRNVDCI.

A Protein kinase domain is found at 9-306 (WMLSDILGQG…QFFAVTNDIF (298 aa)). ATP contacts are provided by residues 15 to 23 (LGQGATANV) and Lys-38. The Proton acceptor role is filled by Asp-135. The region spanning 309 to 385 (IVVHVFSLQQ…ENPIFVLTRE (77 aa)) is the Ubiquitin-like domain. The stretch at 635 to 709 (DIEEEASKCQ…LEENNHILER (75 aa)) forms a coiled coil.

It belongs to the protein kinase superfamily. Ser/Thr protein kinase family. I-kappa-B kinase subfamily. As to quaternary structure, homodimer.

The protein resides in the cytoplasm. The catalysed reaction is L-seryl-[protein] + ATP = O-phospho-L-seryl-[protein] + ADP + H(+). The enzyme catalyses L-threonyl-[protein] + ATP = O-phospho-L-threonyl-[protein] + ADP + H(+). In terms of biological role, serine/threonine kinase that plays an essential role in regulating inflammatory responses to foreign agents. Following activation of toll-like receptors by viral or bacterial components, associates with traf3 and tank and phosphorylates interferon regulatory factors (IRFs) irf3 and irf7 as well as ddx3x. This activity allows subsequent homodimerization and nuclear translocation of the IRFs leading to transcriptional activation of pro-inflammatory and antiviral genes including ifna and ifnb. In order to establish such an antiviral state, TBK1 form several different complexes whose composition depends on the type of cell and cellular stimuli. The protein is Serine/threonine-protein kinase TBK1 (tbk1) of Xenopus laevis (African clawed frog).